The primary structure comprises 102 residues: Large ribosomal subunit protein bL21 (102 aa).

It belongs to the bacterial ribosomal protein bL21 family. As to quaternary structure, part of the 50S ribosomal subunit. Contacts protein L20.

In terms of biological role, this protein binds to 23S rRNA in the presence of protein L20. The polypeptide is Large ribosomal subunit protein bL21 (Pelobacter propionicus (strain DSM 2379 / NBRC 103807 / OttBd1)).